We begin with the raw amino-acid sequence, 328 residues long: Phenylalanine--tRNA ligase alpha subunit (328 aa).

Glu245 is a Mg(2+) binding site.

The protein belongs to the class-II aminoacyl-tRNA synthetase family. Phe-tRNA synthetase alpha subunit type 1 subfamily. As to quaternary structure, tetramer of two alpha and two beta subunits. Mg(2+) serves as cofactor.

The protein localises to the cytoplasm. The catalysed reaction is tRNA(Phe) + L-phenylalanine + ATP = L-phenylalanyl-tRNA(Phe) + AMP + diphosphate + H(+). This is Phenylalanine--tRNA ligase alpha subunit from Helicobacter pylori (strain P12).